Consider the following 968-residue polypeptide: Breast cancer anti-estrogen resistance protein 1 (968 aa).

N-acetylmethionine is present on methionine 1. Residues 97–159 (DKNVLAKALY…PGNRLKILVG (63 aa)) enclose the SH3 domain. The interval 164–277 (KPAAPGPGPP…GPGSPAQDIY (114 aa)) is disordered. The segment covering 167 to 182 (APGPGPPATPPQPQPS) has biased composition (pro residues). The tract at residues 213-514 (YLVPTPSKTQ…DGVYAVPPPA (302 aa)) is substrate for kinases. The residue at position 226 (tyrosine 226) is a Phosphotyrosine; by SRC. Over residues 233 to 249 (PQFQSPPAKQTSTFSKQ) the composition is skewed to polar residues. Position 237 is a phosphoserine (serine 237). The residue at position 332 (tyrosine 332) is a Phosphotyrosine. The residue at position 347 (tyrosine 347) is a Phosphotyrosine; by ABL1. Position 367 is a phosphothreonine (threonine 367). Serine 390 carries the post-translational modification Phosphoserine. The disordered stretch occupies residues 393 to 416 (KGLPPSNHHSVYDVPPSVSKDVPD). Phosphotyrosine occurs at positions 460, 470, and 508. 2 disordered regions span residues 503–544 (IDDG…SLEV) and 705–756 (RTKA…NSEG). Residues 514-524 (AEREAPTDGKR) show a composition bias toward basic and acidic residues. The span at 525–542 (LSASSTGSTRSSQSASSL) shows a compositional bias: low complexity. A phosphoserine mark is found at serine 526, serine 535, and serine 737. The segment covering 715–753 (GSSSLHLNPTDKASSIQSRPLPSPPKFTSQDSPDGQYEN) has biased composition (polar residues). The SH3-binding motif lies at 733–741 (RPLPSPPKF). The interval 844-894 (FYLEQCEANLTTLTDAVDAFFTAVATNQPPKIFVAHSKFVILSAHKLVFIG) is divergent helix-loop-helix motif.

The protein belongs to the CAS family. In terms of assembly, forms complexes in vivo with PTK2/FAK1, adapter protein CRKL and LYN kinase. Can heterodimerize with NEDD9. Component of a complex comprised of SH2D3C, BCAR1/CAS, and CRK. Within the complex, interacts with SH2D3C (via C-terminus), and CRK. Part of a complex comprised of PTPRA, BCAR1, BCAR3 (via SH2 domain) and SRC; the formation of the complex is dependent on integrin mediated-tyrosine phosphorylation of PTPRA. Interacts with BCAR3 (via Ras-GEF domain); the interaction regulates adhesion-dependent serine phosphorylation. Interacts with SMAD2 and SMAD3. Interacts with NPHP1. Interacts with PTK2B/PYK2. Interacts (via C-terminus) with SH2D3C/CHAT isoform 2 (via C-terminus). Interacts with activated CSPG4. Interacts with BMX, INPPL1/SHIP2 and PEAK1. Part of a collagen stimulated complex involved in cell migration composed of CDC42, CRK, TNK2 and BCAR1/p130cas. Interacts with TNK2 via SH3 domains. Interacts with PTK2B/PYK2. Interacts (when tyrosine-phosphorylated) with tensin TNS1; the interaction is increased by phosphorylation of TNS1. In terms of processing, PTK2/FAK1 activation mediates phosphorylation at the YDYVHL motif; phosphorylation is most likely catalyzed by SRC family members. SRC-family kinases are recruited to the phosphorylated sites and can phosphorylate other tyrosine residues. Tyrosine phosphorylation is triggered by integrin mediated adhesion of cells to the extracellular matrix. Phosphorylated by SRC kinase in a EDN1- and PTK2B-mediated manner; phosphorylation strengthens its interaction with BCAR3 as part of the PTK2B/BCAR1/BCAR3/RAP1 signaling pathway. Post-translationally, dephosphorylated by PTPN14 at Tyr-226. Widely expressed. Higher expression in lung, intestine and testis.

It localises to the cell junction. It is found in the focal adhesion. The protein resides in the cytoplasm. Its subcellular location is the cell projection. The protein localises to the axon. In terms of biological role, docking protein which plays a central coordinating role for tyrosine-kinase-based signaling related to cell adhesion. Implicated in induction of cell migration and cell branching. Involved in the BCAR3-mediated inhibition of TGFB signaling. This Rattus norvegicus (Rat) protein is Breast cancer anti-estrogen resistance protein 1 (Bcar1).